The primary structure comprises 240 residues: Probable Ni/Fe-hydrogenase B-type cytochrome subunit (240 aa).

4 helical membrane-spanning segments follow: residues 31–51 (LWHW…YFIG), 75–95 (FAAG…AFVG), 142–163 (LAMF…FALY), and 196–213 (LGMW…YLAA).

It belongs to the HupC/HyaC/HydC family.

The protein localises to the cell membrane. Probable b-type cytochrome. The chain is Probable Ni/Fe-hydrogenase B-type cytochrome subunit (hupZ) from Azotobacter chroococcum mcd 1.